Here is a 355-residue protein sequence, read N- to C-terminus: Methyltransferase FUS9 (355 aa).

The S-adenosyl-L-homocysteine site is built by Y18, N63, D86, S123, and F124. Residue F231 coordinates Mg(2+).

The protein belongs to the methyltransferase superfamily. Type-7 methyltransferase family. It depends on Mg(2+) as a cofactor.

It participates in mycotoxin biosynthesis. Its function is as follows. Methyltransferase; part of the gene cluster that mediates the biosynthesis of the mycotoxin fusarin C. Within the cluster, FUS1, FUS2, FUS8 and FUS9 are sufficient for fusarin production. The roles of the other FUS members are yet undetermined. The fusarin C synthetase FUS1 is responsible for the condensation of one acetyl-coenzyme A (CoA) unit with six malonyl-CoA units and the amide linkage of the arising heptaketide and homoserine, subsequently releasing the first intermediate, prefusarin, as an alcohol with an open ring structure. The cytochrome P450 monooxygenase FUS8 participates in multiple oxidation processes at carbon C-20 and is able to use the FUS1 product as substrate, resulting in formation of 20-hydroxy-prefusarin. This reaction seems to be essential before the 2-pyrrolidone ring closure can be catalyzed by FUS2, generating 20-hydroxy-fusarin. FUS8 is able to further oxidizes carbon C-20 after ring closure, resulting in the formation of carboxy-fusarin C. As the last step, FUS9 methylates the hydroxyl group at C-21 to generate fusarin C. Fusarin C can then rearrange to epi-fusarin C, the (z)-isomers, and fusarin A and fusarin D. In Gibberella moniliformis (strain M3125 / FGSC 7600) (Maize ear and stalk rot fungus), this protein is Methyltransferase FUS9.